The following is a 238-amino-acid chain: Monocyte to macrophage differentiation factor (238 aa).

Residues 1-28 (MRFRNRFQRFMNHRAPANGRYKPTCYEH) lie on the Cytoplasmic side of the membrane. The helical transmembrane segment at 29 to 49 (AANCYTHAFLIVPAIVGSALL) threads the bilayer. Topologically, residues 50–61 (HRLSDDCWEKIT) are lumenal. A helical transmembrane segment spans residues 62–82 (AWIYGMGLCALFIVSTVFHIV). The Cytoplasmic portion of the chain corresponds to 83–101 (SWKKSHLRTVEHCFHMCDR). Residues 102-122 (MVIYFFIAASYAPWLNLRELG) traverse the membrane as a helical segment. Residue proline 123 is a topological domain, lumenal. Residues 124-144 (LASHMRWFIWLMAAGGTIYVF) traverse the membrane as a helical segment. Residues 145 to 151 (LYHEKYK) lie on the Cytoplasmic side of the membrane. A helical membrane pass occupies residues 152 to 172 (VVELFFYLTMGFSPALVVTSM). At 173-174 (NN) the chain is on the lumenal side. Residues 175–195 (TDGLQELACGGLIYCLGVVFF) traverse the membrane as a helical segment. At 196-198 (KSD) the chain is on the cytoplasmic side. Residues 199–219 (GIIPFAHAIWHLFVATAAAVH) form a helical membrane-spanning segment. Over 220–238 (YYAIWKYLYRSPTDFIRHL) the chain is Lumenal.

This sequence belongs to the ADIPOR family.

The protein resides in the late endosome membrane. It is found in the lysosome membrane. In terms of biological role, involved in the dynamics of lysosomal membranes associated with microglial activation following brain lesion. This chain is Monocyte to macrophage differentiation factor, found in Mus musculus (Mouse).